The sequence spans 907 residues: CRM-domain containing factor CFM3B, chloroplastic (907 aa).

Residues 1-59 (MAINSSHHFCPMTTTTTTSAKFVDSLGSSFCKFHGTSSSISLRSYRFGFSFMKNVKRLS) constitute a chloroplast transit peptide. 2 disordered regions span residues 62 to 89 (GSSSSSSSRNENWNRTQKQNQFRPSKVV) and 101 to 123 (LGVISGENSSRSGDVGGGSGSSS). Residues 70–84 (RNENWNRTQKQNQFR) show a composition bias toward polar residues. 2 consecutive CRM domains span residues 220–316 (MTLS…DGSG) and 421–518 (STLG…EVGE). Residues 621–654 (SAKLVRKLERKLAFAEKKLLKAERALAKVEESLK) adopt a coiled-coil conformation. The 101-residue stretch at 663–763 (EGITEEERFM…KDYKRPTTLR (101 aa)) folds into the CRM 3 domain. Residues 824 to 907 (MAYSSDEETE…LQNEELDVQP (84 aa)) form a disordered region. Acidic residues-rich tracts occupy residues 828 to 857 (SDEETEETDGEEDDVYLDTYEDEGEDDEEG) and 868 to 881 (TDVEFGSDESDTDF). The span at 882 to 897 (GDNSASSTTPETTFVE) shows a compositional bias: polar residues.

As to quaternary structure, interacts with RNA. Part of large ribonucleo-protein particles that contain CAF1 and/or CAF2, and RNC1. Interacts with RFC3 in plastids. In terms of tissue distribution, expressed at low levels in roots and shoots.

The protein localises to the plastid. Its subcellular location is the chloroplast. Functionally, binds specific group II introns in chloroplasts and facilitates their splicing. Exhibits non-specific action during plastid rRNA biogenesis; RFC3 prevents unaccurate splicing to improve the accuracy of plastid rRNA processing. Acts on subgroup IIB introns. The substrates of the subgroup IIB also require the CRM domain proteins CAF1 or CAF2, with a simultaneous binding of CFM3B and CAF1 or CAF2. Required for seed development. In Arabidopsis thaliana (Mouse-ear cress), this protein is CRM-domain containing factor CFM3B, chloroplastic.